Here is a 230-residue protein sequence, read N- to C-terminus: Cytidylate kinase (230 aa).

12-20 (GPSGAGKGT) is an ATP binding site.

This sequence belongs to the cytidylate kinase family. Type 1 subfamily.

The protein localises to the cytoplasm. The catalysed reaction is CMP + ATP = CDP + ADP. It carries out the reaction dCMP + ATP = dCDP + ADP. In Shewanella oneidensis (strain ATCC 700550 / JCM 31522 / CIP 106686 / LMG 19005 / NCIMB 14063 / MR-1), this protein is Cytidylate kinase.